Reading from the N-terminus, the 521-residue chain is Acidic amino acid decarboxylase GADL1 (521 aa).

An N6-(pyridoxal phosphate)lysine modification is found at Lys-333.

This sequence belongs to the group II decarboxylase family. Homodimer. Pyridoxal 5'-phosphate serves as cofactor. In terms of tissue distribution, expressed very weakly in neurons and not detected in astrocytes, brain or liver.

It catalyses the reaction L-aspartate + H(+) = beta-alanine + CO2. The catalysed reaction is 3-sulfino-L-alanine + H(+) = hypotaurine + CO2. It carries out the reaction L-cysteate + H(+) = taurine + CO2. Functionally, may catalyze the decarboxylation of L-aspartate, 3-sulfino-L-alanine (cysteine sulfinic acid), and L-cysteate to beta-alanine, hypotaurine and taurine, respectively. Does not exhibit any decarboxylation activity toward glutamate. This is Acidic amino acid decarboxylase GADL1 (GADL1) from Homo sapiens (Human).